Reading from the N-terminus, the 473-residue chain is UDP-glycosyltransferase 71B1 (473 aa).

Histidine 15 (proton acceptor) is an active-site residue. Histidine 15 is a binding site for an anthocyanidin. The active-site Charge relay is aspartate 110. Positions 132, 342, 344, 359, 362, 363, 364, and 367 each coordinate UDP-alpha-D-glucose. Alanine 382 serves as a coordination point for an anthocyanidin. Residues glutamate 383 and glutamine 384 each coordinate UDP-alpha-D-glucose.

This sequence belongs to the UDP-glycosyltransferase family.

It carries out the reaction a flavonol + UDP-alpha-D-glucose = a flavonol 3-O-beta-D-glucoside + UDP + H(+). Its function is as follows. Possesses quercetin 3-O-glucosyltransferase activity in vitro. Also active in vitro on benzoates and benzoate derivatives. The protein is UDP-glycosyltransferase 71B1 (UGT71B1) of Arabidopsis thaliana (Mouse-ear cress).